The chain runs to 150 residues: Transcriptional regulator MraZ (150 aa).

SpoVT-AbrB domains follow at residues 5–51 and 80–123; these read VANL…PQPE and ATEC…DEDT.

This sequence belongs to the MraZ family. As to quaternary structure, forms oligomers.

It localises to the cytoplasm. It is found in the nucleoid. This is Transcriptional regulator MraZ from Thioalkalivibrio sulfidiphilus (strain HL-EbGR7).